The chain runs to 189 residues: HGPRTase-like protein (189 aa).

It belongs to the purine/pyrimidine phosphoribosyltransferase family. Archaeal HPRT subfamily.

May catalyze a purine salvage reaction, the substrate is unknown. The chain is HGPRTase-like protein from Halomicrobium mukohataei (strain ATCC 700874 / DSM 12286 / JCM 9738 / NCIMB 13541) (Haloarcula mukohataei).